Here is a 106-residue protein sequence, read N- to C-terminus: Small ribosomal subunit protein uS10 (106 aa).

The protein belongs to the universal ribosomal protein uS10 family. As to quaternary structure, part of the 30S ribosomal subunit.

Involved in the binding of tRNA to the ribosomes. This Synechococcus sp. (strain WH7803) protein is Small ribosomal subunit protein uS10.